The primary structure comprises 379 residues: Alcohol dehydrogenase 1 (379 aa).

Residues C47, T49, H69, C99, C102, C105, C113, and C177 each coordinate Zn(2+). Residues T49 and H69 each contribute to the an alcohol site. An NAD(+)-binding site is contributed by T49. NAD(+) contacts are provided by residues 202 to 207 (GLGAVG), D226, R231, T272, V295, 295 to 297 (VGV), F322, and R372.

Belongs to the zinc-containing alcohol dehydrogenase family. Homodimer. Zn(2+) is required as a cofactor.

Its subcellular location is the cytoplasm. The enzyme catalyses a primary alcohol + NAD(+) = an aldehyde + NADH + H(+). The catalysed reaction is a secondary alcohol + NAD(+) = a ketone + NADH + H(+). This chain is Alcohol dehydrogenase 1 (ADH1), found in Oryza sativa subsp. indica (Rice).